Reading from the N-terminus, the 159-residue chain is U1 small nuclear ribonucleoprotein C (159 aa).

The segment at 4-36 adopts a Matrin-type zinc-finger fold; sequence FYCDYCDTYLTHDSPSVRKTHCSGRKHKENVKD. The tract at residues 61–99 is disordered; it reads KIPPTPFPGAPPPGGSLLPHPSIGGPPRPGMLPAPPMGG. Pro residues-rich tracts occupy residues 63–74 and 84–99; these read PPTPFPGAPPPG and GGPP…PMGG.

It belongs to the U1 small nuclear ribonucleoprotein C family. In terms of assembly, component of the U1 snRNP. The U1 snRNP is composed of the U1 snRNA and the 7 core Sm proteins snrpb, snrpd1, snrpd2, snrpd3, snrpe, snrpf and snrpg that assemble in a heptameric protein ring on the Sm site of the small nuclear RNA to form the core snRNP, and at least 3 U1 snRNP-specific proteins snrnp70/U1-70K, snrpa/U1-A and snrpc/U1-C. snrpc/U1-C interacts with U1 snRNA and the 5' splice-site region of the pre-mRNA.

It localises to the nucleus. Functionally, component of the spliceosomal U1 snRNP, which is essential for recognition of the pre-mRNA 5' splice-site and the subsequent assembly of the spliceosome. snrpc/U1-C is directly involved in initial 5' splice-site recognition for both constitutive and regulated alternative splicing. The interaction with the 5' splice-site seems to precede base-pairing between the pre-mRNA and the U1 snRNA. Stimulates commitment or early (E) complex formation by stabilizing the base pairing of the 5' end of the U1 snRNA and the 5' splice-site region. This is U1 small nuclear ribonucleoprotein C from Danio rerio (Zebrafish).